The primary structure comprises 200 residues: Holliday junction branch migration complex subunit RuvA (200 aa).

The tract at residues 1-64 (MIGHLRGIIV…EDAHTLYGFH (64 aa)) is domain I. Residues 65–143 (NDHERRLFRA…RWHTNDTPSP (79 aa)) form a domain II region. Residues 133–152 (SRWHTNDTPSPEGLRSSNTQ) are disordered. Residues 144–148 (EGLRS) form a flexible linker region. The interval 149-200 (SNTQPTQDAISALMALGYKPQEAKRAIDAIQKPDLSAETLIRLALKQMVLGT) is domain III.

This sequence belongs to the RuvA family. In terms of assembly, homotetramer. Forms an RuvA(8)-RuvB(12)-Holliday junction (HJ) complex. HJ DNA is sandwiched between 2 RuvA tetramers; dsDNA enters through RuvA and exits via RuvB. An RuvB hexamer assembles on each DNA strand where it exits the tetramer. Each RuvB hexamer is contacted by two RuvA subunits (via domain III) on 2 adjacent RuvB subunits; this complex drives branch migration. In the full resolvosome a probable DNA-RuvA(4)-RuvB(12)-RuvC(2) complex forms which resolves the HJ.

Its subcellular location is the cytoplasm. Functionally, the RuvA-RuvB-RuvC complex processes Holliday junction (HJ) DNA during genetic recombination and DNA repair, while the RuvA-RuvB complex plays an important role in the rescue of blocked DNA replication forks via replication fork reversal (RFR). RuvA specifically binds to HJ cruciform DNA, conferring on it an open structure. The RuvB hexamer acts as an ATP-dependent pump, pulling dsDNA into and through the RuvAB complex. HJ branch migration allows RuvC to scan DNA until it finds its consensus sequence, where it cleaves and resolves the cruciform DNA. This Coxiella burnetii (strain CbuK_Q154) (Coxiella burnetii (strain Q154)) protein is Holliday junction branch migration complex subunit RuvA.